A 732-amino-acid chain; its full sequence is Interleukin-31 receptor subunit alpha (732 aa).

Positions 1–19 (MMWTWALWMLPSLCKFSLA) are cleaved as a signal peptide. The Extracellular portion of the chain corresponds to 20 to 519 (ALPAKPENIS…FKTLSFSVFE (500 aa)). 5 consecutive Fibronectin type-III domains span residues 24–122 (KPEN…IAKT), 124–225 (PPKI…TEEE), 223–315 (EEEA…PVAT), 319–416 (PAIQ…QAYA), and 421–515 (PSEG…TLSF). Residues N37, N67, N93, N166, N187, N277, N283, N395, N455, and N504 are each glycosylated (N-linked (GlcNAc...) asparagine). The chain crosses the membrane as a helical span at residues 520-540 (IILITSLIGGGLLILIILTVA). Residues 541–732 (YGLKKPNKLT…KLPEHTKGEV (192 aa)) lie on the Cytoplasmic side of the membrane.

The protein belongs to the type I cytokine receptor family. Type 2 subfamily. As to quaternary structure, heterodimer with OSMR. Interacts with JAK1 and STAT3. Post-translationally, N-glycosylated. Expressed in CD14- and CD56-positive blood cells. Expressed in macrophages. Expressed in keratinocytes. Expressed in a subset of dorsal root ganglia neurons (at protein level). Expressed at low levels in testis, ovary, brain, prostate, placenta, thymus, bone marrow, trachea and skin. Expressed in bronchial and alveolar epithelial cells and pulmonary fibroblasts. Detected in all of the myelomonocytic lineage. Isoform 6: Expressed at higher levels in lesional skin compared to healthy skin of atopic dermatitis patients.

It localises to the cell membrane. The protein resides in the presynaptic cell membrane. Its subcellular location is the cell projection. It is found in the axon. Its function is as follows. Associates with OSMR to form the interleukin-31 receptor which activates STAT3 and to a lower extent STAT1 and STAT5. May function in skin immunity. Mediates IL31-induced itch, probably in a manner dependent on cation channels TRPA1 and TRPV1. Positively regulates numbers and cycling status of immature subsets of myeloid progenitor cells in bone marrow in vivo and enhances myeloid progenitor cell survival in vitro. This chain is Interleukin-31 receptor subunit alpha (IL31RA), found in Homo sapiens (Human).